We begin with the raw amino-acid sequence, 325 residues long: Phospho-N-acetylmuramoyl-pentapeptide-transferase (325 aa).

9 helical membrane-spanning segments follow: residues 7–27 (LFVLILSFAAAVIMSPLFIPF), 57–77 (IVIVLSIFISALAIGIAITGF), 81–101 (LLLLMVVTLGYGIVGFVDDYL), 122–142 (VIAAIFYIGLLAIGFDTFIAI), 146–166 (TFGFDLGWLYLILIVLMLLGA), 186–206 (IAFGAFAILAWSGGFIDTALF), 227–247 (VFMGDTGSLALGGAIAAIAIL), 252–272 (LMLIIVGGVFVIETLSVIIQV), and 302–322 (VVVTFWLVGMIFAIMGVYIGV).

It belongs to the glycosyltransferase 4 family. MraY subfamily. Mg(2+) is required as a cofactor.

It is found in the cell membrane. It catalyses the reaction UDP-N-acetyl-alpha-D-muramoyl-L-alanyl-gamma-D-glutamyl-meso-2,6-diaminopimeloyl-D-alanyl-D-alanine + di-trans,octa-cis-undecaprenyl phosphate = di-trans,octa-cis-undecaprenyl diphospho-N-acetyl-alpha-D-muramoyl-L-alanyl-D-glutamyl-meso-2,6-diaminopimeloyl-D-alanyl-D-alanine + UMP. It functions in the pathway cell wall biogenesis; peptidoglycan biosynthesis. In terms of biological role, catalyzes the initial step of the lipid cycle reactions in the biosynthesis of the cell wall peptidoglycan: transfers peptidoglycan precursor phospho-MurNAc-pentapeptide from UDP-MurNAc-pentapeptide onto the lipid carrier undecaprenyl phosphate, yielding undecaprenyl-pyrophosphoryl-MurNAc-pentapeptide, known as lipid I. This is Phospho-N-acetylmuramoyl-pentapeptide-transferase from Shouchella clausii (strain KSM-K16) (Alkalihalobacillus clausii).